The sequence spans 804 residues: Endoplasmin (804 aa).

The first 21 residues, 1–21 (MRALWVLGLCCVLLTFGSVRA), serve as a signal peptide directing secretion. Residues 42–44 (SRT) carry the SRT pseudosubstrate motif motif. The N-linked (GlcNAc...) asparagine glycan is linked to N62. At S64 the chain carries Phosphoserine. Residue N107 is glycosylated (N-linked (GlcNAc...) asparagine). Residues N107, D149, and N162 each coordinate ATP. An N6-(2-hydroxyisobutyryl)lysine modification is found at K168. S172 carries the phosphoserine modification. F199 provides a ligand contact to ATP. Residue N217 is glycosylated (N-linked (GlcNAc...) asparagine). At T288 the chain carries Phosphothreonine; by CK2. Positions 288-323 (TVEEPMEEEEAAKEEKEDSDDEAAVEEEEEEKKPKT) are disordered. The segment covering 289-317 (VEEPMEEEEAAKEEKEDSDDEAAVEEEEE) has biased composition (acidic residues). A Phosphoserine; by CK2 modification is found at S306. S403 carries the post-translational modification Phosphoserine. Position 404 is an N6-succinyllysine (K404). N445 carries an N-linked (GlcNAc...) asparagine glycan. S447 carries the phosphoserine modification. Residue K479 is modified to N6-acetyllysine. N-linked (GlcNAc...) asparagine glycosylation is found at N481 and N502. K633 carries the N6-succinyllysine modification. The interval 750–804 (DPDAKVEEEPEEEPEETTEDTTEDTEQDDEEEMDAGTDDEEQETVKKSTAEKDEL) is disordered. Positions 757 to 791 (EEPEEEPEETTEDTTEDTEQDDEEEMDAGTDDEEQ) are enriched in acidic residues. 4 positions are modified to phosphothreonine; by CK2: T766, T770, T774, and T786. Basic and acidic residues predominate over residues 792-804 (ETVKKSTAEKDEL). Positions 801-804 (KDEL) match the Prevents secretion from ER motif.

Belongs to the heat shock protein 90 family. As to quaternary structure, homodimer; disulfide-linked. Component of an EIF2 complex at least composed of CELF1/CUGBP1, CALR, CALR3, EIF2S1, EIF2S2, HSP90B1 and HSPA5. Part of a large chaperone multiprotein complex comprising DNAJB11, HSP90B1, HSPA5, HYOU, PDIA2, PDIA4, PDIA6, PPIB, SDF2L1, UGGT1 and very small amounts of ERP29, but not, or at very low levels, CALR nor CANX. Interacts with AIMP1; regulates its retention in the endoplasmic reticulum. Hyperglycosylated form interacts with OS9; promoting its degradation by the endoplasmic reticulum associated degradation (ERAD). Interacts with CNPY3. This interaction is disrupted in the presence of ATP. Interacts with TLR4 and TLR9, but not with TLR3. Interacts with MZB1 in a calcium-dependent manner. Interacts with METTL23. Interacts with IL1B; the interaction facilitates cargo translocation into the ERGIC. Interacts with EIF2AK3. Phosphorylated by CK2. In terms of processing, N-glycosylated cotranslationally at Asn-217 by STT3A-containing OST-A complex: this glycosylation is constitutive. In response to various stress, 5 additional facultative sites (Asn-62, Asn-107, Asn-445, Asn-481 and Asn-502) can be glycosylated post-translationally by STT3B-containing OST-B complex, leading to a hyperglycosylated form that is degraded by the ER-associated degradation (ERAD) pathway. In normal conditions, the OST-A complex together with CCDC134 prevent glycosylation at facultative sites during protein folding, thereby preventing hyperglycosylation. Mechanistically, nascent HSP90B1 is tethered during translation to a specialized CCDC134-containing translocon that forms a microenvironment for its folding, in which STT3A associates with the SRT pseudosubstrate motif, and prevents access to facultative glycosylation sites until folding is completed, rendering its facultative sites inaccessible to the OST-B complex. Detected in heart muscle (at protein level).

Its subcellular location is the endoplasmic reticulum lumen. The protein resides in the sarcoplasmic reticulum lumen. It localises to the melanosome. The catalysed reaction is ATP + H2O = ADP + phosphate + H(+). In terms of biological role, ATP-dependent chaperone involved in the processing of proteins in the endoplasmic reticulum, regulating their transport. Together with MESD, acts as a modulator of the Wnt pathway by promoting the folding of LRP6, a coreceptor of the canonical Wnt pathway. When associated with CNPY3, required for proper folding of Toll-like receptors. Promotes folding and trafficking of TLR4 to the cell surface. May participate in the unfolding of cytosolic leaderless cargos (lacking the secretion signal sequence) such as the interleukin 1/IL-1 to facilitate their translocation into the ERGIC (endoplasmic reticulum-Golgi intermediate compartment) and secretion; the translocation process is mediated by the cargo receptor TMED10. May also function in endoplasmic reticulum associated degradation (ERAD); it is however unclear whether it participates to ERAD or is a target of ERAD. The protein is Endoplasmin (HSP90B1) of Canis lupus familiaris (Dog).